The chain runs to 124 residues: Sulfur globule protein CV2 (124 aa).

The signal sequence occupies residues 1–22; the sequence is MKKLATAAAVAALLGASASASA.

In terms of assembly, the protein envelope of the sulfur globules is composed of the three different proteins CV1, CV2 and CV3.

In terms of biological role, structural protein of the sulfur globules, which are intracellular globules that serve for sulfur storage in purple sulfur bacteria. This Allochromatium vinosum (strain ATCC 17899 / DSM 180 / NBRC 103801 / NCIMB 10441 / D) (Chromatium vinosum) protein is Sulfur globule protein CV2 (sgpB).